The sequence spans 246 residues: uncharacterized protein (246 aa).

Belongs to the BtpA family.

This is an uncharacterized protein from Archaeoglobus fulgidus (strain ATCC 49558 / DSM 4304 / JCM 9628 / NBRC 100126 / VC-16).